The chain runs to 38 residues: Large ribosomal subunit protein bL36 (38 aa).

This sequence belongs to the bacterial ribosomal protein bL36 family.

The protein is Large ribosomal subunit protein bL36 of Baumannia cicadellinicola subsp. Homalodisca coagulata.